We begin with the raw amino-acid sequence, 188 residues long: Small ribosomal subunit protein uS7 (188 aa).

Belongs to the universal ribosomal protein uS7 family. Part of the 30S ribosomal subunit.

One of the primary rRNA binding proteins, it binds directly to 16S rRNA where it nucleates assembly of the head domain of the 30S subunit. Is located at the subunit interface close to the decoding center. The polypeptide is Small ribosomal subunit protein uS7 (Methanococcus maripaludis (strain C6 / ATCC BAA-1332)).